Here is a 293-residue protein sequence, read N- to C-terminus: Cytosolic Fe-S cluster assembly factor CFD1 (293 aa).

25–32 (GKGGVGKS) serves as a coordination point for ATP. Residues C201 and C204 each contribute to the [4Fe-4S] cluster site. S291 is modified (phosphoserine).

It belongs to the Mrp/NBP35 ATP-binding proteins family. NUBP2/CFD1 subfamily. As to quaternary structure, heterotetramer of 2 NBP35 and 2 CFD1 chains. Requires [4Fe-4S] cluster as cofactor.

The protein localises to the cytoplasm. In terms of biological role, component of the cytosolic iron-sulfur (Fe/S) protein assembly (CIA) machinery. Required for maturation of extramitochondrial Fe-S proteins. The NBP35-CFD1 heterotetramer forms a Fe-S scaffold complex, mediating the de novo assembly of an Fe-S cluster and its transfer to target apoproteins. Nucleotide binding/hydrolysis seems to be critcal for loading of Fe-S clusters onto CFD1 and NBP35. Required for biogenesis and export of both ribosomal subunits, which may reflect a role in assembly of the Fe/S clusters in RLI1, a protein which performs rRNA processing and ribosome export. The chain is Cytosolic Fe-S cluster assembly factor CFD1 from Saccharomyces cerevisiae (strain ATCC 204508 / S288c) (Baker's yeast).